Reading from the N-terminus, the 108-residue chain is FK506-binding protein 1 (108 aa).

In terms of domain architecture, PPIase FKBP-type spans 20 to 108; that stretch reads GDAVTIHYVG…VFDVELLGIN (89 aa).

This sequence belongs to the FKBP-type PPIase family. FKBP1 subfamily.

It is found in the cytoplasm. The catalysed reaction is [protein]-peptidylproline (omega=180) = [protein]-peptidylproline (omega=0). Inhibited by both FK506 and rapamycin. Functionally, PPIases accelerate the folding of proteins. It catalyzes the cis-trans isomerization of proline imidic peptide bonds in oligopeptides. In Yarrowia lipolytica (strain CLIB 122 / E 150) (Yeast), this protein is FK506-binding protein 1 (FPR1).